The primary structure comprises 300 residues: Cation-efflux pump FieF (300 aa).

The chain crosses the membrane as a helical span at residues 24-44 (LLIKIFAWWYTGSVSILAALV). Zn(2+) is bound by residues D45 and D49. Transmembrane regions (helical) follow at residues 82–102 (AALA…LTGI) and 114–134 (AGVG…LVTF). Residues H153 and D157 each coordinate Zn(2+). Helical transmembrane passes span 156 to 176 (SDVM…YGWH) and 178 to 198 (ADAL…LRMG).

Belongs to the cation diffusion facilitator (CDF) transporter (TC 2.A.4) family. FieF subfamily. Homodimer.

Its subcellular location is the cell inner membrane. The enzyme catalyses Zn(2+)(in) + H(+)(out) = Zn(2+)(out) + H(+)(in). The catalysed reaction is Cd(2+)(in) + H(+)(out) = Cd(2+)(out) + H(+)(in). It carries out the reaction Fe(2+)(in) + H(+)(out) = Fe(2+)(out) + H(+)(in). In terms of biological role, divalent metal cation transporter which exports Zn(2+), Cd(2+) and possibly Fe(2+). May be involved in zinc and iron detoxification by efflux. In Klebsiella pneumoniae subsp. pneumoniae (strain ATCC 700721 / MGH 78578), this protein is Cation-efflux pump FieF.